A 227-amino-acid polypeptide reads, in one-letter code: MGGKLSKKKKGYNVNDEKAKEKDKKAEGAATEEEGTPKESEPQAAAEPAEAKEGKEKPDQDAEGKAEEKEGEKDAAAAKEEAPKAEPEKTEGAAEAKAEPPKAPEQEQAAPGPAAGGEAPKAAEAAAAPAESAAPAAGEEPSKEEGEPKKTEAPAAPAAQETKSDGAPASDSKPGSSEAAPSSKETPAATEAPSSTPKAQGPAASAEEPKPVEAPAANSDQTVTVKE.

Residues 1 to 11 show a composition bias toward basic residues; it reads MGGKLSKKKKG. Residues 1-227 form a disordered region; the sequence is MGGKLSKKKK…NSDQTVTVKE (227 aa). A lipid anchor (N-myristoyl glycine) is attached at Gly2. The segment covering 15–27 has biased composition (basic and acidic residues); it reads NDEKAKEKDKKAE. Lys25 participates in a covalent cross-link: Glycyl lysine isopeptide (Lys-Gly) (interchain with G-Cter in SUMO2). Residues Thr31 and Thr36 each carry the phosphothreonine modification. Ser40 bears the Phosphoserine mark. The span at 49–105 shows a compositional bias: basic and acidic residues; it reads AEAKEGKEKPDQDAEGKAEEKEGEKDAAAAKEEAPKAEPEKTEGAAEAKAEPPKAPE. Glycyl lysine isopeptide (Lys-Gly) (interchain with G-Cter in SUMO2) cross-links involve residues Lys84 and Lys97. Residues 106 to 139 show a composition bias toward low complexity; that stretch reads QEQAAPGPAAGGEAPKAAEAAAAPAESAAPAAGE. The span at 140–152 shows a compositional bias: basic and acidic residues; the sequence is EPSKEEGEPKKTE. Lys163 participates in a covalent cross-link: Glycyl lysine isopeptide (Lys-Gly) (interchain with G-Cter in SUMO2). Ser164, Ser170, Ser172, Ser176, and Ser195 each carry phosphoserine. A compositionally biased stretch (polar residues) spans 173 to 185; that stretch reads KPGSSEAAPSSKE. Thr196 carries the post-translational modification Phosphothreonine. Residues Ser205 and Ser219 each carry the phosphoserine modification. The segment covering 218–227 has biased composition (polar residues); that stretch reads NSDQTVTVKE.

Brain.

It is found in the cell membrane. Its subcellular location is the cell projection. The protein localises to the growth cone. The protein is Brain acid soluble protein 1 (BASP1) of Homo sapiens (Human).